The following is a 341-amino-acid chain: ATP-dependent 6-phosphofructokinase 3 (341 aa).

ATP contacts are provided by residues G10, 72 to 73 (RV), and 102 to 105 (GEGT). E103 contacts Mg(2+). Substrate-binding positions include 125–127 (TID), R162, 169–171 (MGR), E222, R266, and 272–275 (HVQR). D127 functions as the Proton acceptor in the catalytic mechanism.

Belongs to the phosphofructokinase type A (PFKA) family. Mixed-substrate PFK group III subfamily. As to quaternary structure, homodimer or homotetramer. It depends on Mg(2+) as a cofactor.

The protein localises to the cytoplasm. The enzyme catalyses beta-D-fructose 6-phosphate + ATP = beta-D-fructose 1,6-bisphosphate + ADP + H(+). The protein operates within carbohydrate degradation; glycolysis; D-glyceraldehyde 3-phosphate and glycerone phosphate from D-glucose: step 3/4. Its function is as follows. Catalyzes the phosphorylation of D-fructose 6-phosphate to fructose 1,6-bisphosphate by ATP, the first committing step of glycolysis. The sequence is that of ATP-dependent 6-phosphofructokinase 3 from Streptomyces coelicolor (strain ATCC BAA-471 / A3(2) / M145).